Consider the following 512-residue polypeptide: Lysine--tRNA ligase (512 aa).

Positions 408 and 415 each coordinate Mg(2+).

Belongs to the class-II aminoacyl-tRNA synthetase family. In terms of assembly, homodimer. Mg(2+) is required as a cofactor.

The protein resides in the cytoplasm. The catalysed reaction is tRNA(Lys) + L-lysine + ATP = L-lysyl-tRNA(Lys) + AMP + diphosphate. The polypeptide is Lysine--tRNA ligase (Prochlorococcus marinus (strain MIT 9312)).